The primary structure comprises 543 residues: Aspartate/alanine antiporter (543 aa).

A run of 10 helical transmembrane segments spans residues 4 to 26, 33 to 55, 88 to 110, 117 to 139, 159 to 178, 362 to 381, 385 to 407, 428 to 450, 455 to 477, and 520 to 542; these read IGNF…GYLL, SFTL…LGVF, FGAK…AYAC, GPGI…GSSL, IPIV…LIFL, IINY…LGIV, VSGV…VQSI, SIGL…ISAI, ISVL…VICY, and VAPA…IVLL.

Belongs to the AAE transporter (TC 2.A.81) family.

Its subcellular location is the cell membrane. Catalyzes the electrogenic exchange of aspartate with alanine. The sequence is that of Aspartate/alanine antiporter (aspT) from Tetragenococcus halophilus (Pediococcus halophilus).